The sequence spans 458 residues: Elongation factor 1-alpha (458 aa).

Gly2 carries the n,N,N-trimethylglycine modification. Lys3 carries the post-translational modification N6,N6-dimethyllysine; alternate. Residue Lys3 is modified to N6-methyllysine; alternate. The 236-residue stretch at 5–240 (KTHVNVVVIG…DAIEPPVRPS (236 aa)) folds into the tr-type G domain. Positions 14 to 21 (GHVDSGKS) are G1. GTP is bound at residue 14–21 (GHVDSGKS). Lys30 is subject to N6-methyllysine. The G2 stretch occupies residues 70 to 74 (GITID). Position 79 is an N6,N6,N6-trimethyllysine (Lys79). The G3 stretch occupies residues 91-94 (DAPG). GTP is bound by residues 91 to 95 (DAPGH) and 153 to 156 (NKMD). The interval 153–156 (NKMD) is G4. The interval 192–194 (SGW) is G5. Residue Lys316 is modified to N6,N6-dimethyllysine; alternate. Lys316 carries the post-translational modification N6-methyllysine; alternate. Lys390 carries the post-translational modification N6-methyllysine.

The protein belongs to the TRAFAC class translation factor GTPase superfamily. Classic translation factor GTPase family. EF-Tu/EF-1A subfamily.

The protein localises to the cytoplasm. This protein promotes the GTP-dependent binding of aminoacyl-tRNA to the A-site of ribosomes during protein biosynthesis. This Mucor circinelloides f. lusitanicus (Mucor racemosus var. lusitanicus) protein is Elongation factor 1-alpha (TEF-1).